The sequence spans 177 residues: ATP synthase subunit delta (177 aa).

Belongs to the ATPase delta chain family. As to quaternary structure, F-type ATPases have 2 components, F(1) - the catalytic core - and F(0) - the membrane proton channel. F(1) has five subunits: alpha(3), beta(3), gamma(1), delta(1), epsilon(1). F(0) has three main subunits: a(1), b(2) and c(10-14). The alpha and beta chains form an alternating ring which encloses part of the gamma chain. F(1) is attached to F(0) by a central stalk formed by the gamma and epsilon chains, while a peripheral stalk is formed by the delta and b chains.

It is found in the cell inner membrane. In terms of biological role, f(1)F(0) ATP synthase produces ATP from ADP in the presence of a proton or sodium gradient. F-type ATPases consist of two structural domains, F(1) containing the extramembraneous catalytic core and F(0) containing the membrane proton channel, linked together by a central stalk and a peripheral stalk. During catalysis, ATP synthesis in the catalytic domain of F(1) is coupled via a rotary mechanism of the central stalk subunits to proton translocation. Functionally, this protein is part of the stalk that links CF(0) to CF(1). It either transmits conformational changes from CF(0) to CF(1) or is implicated in proton conduction. The chain is ATP synthase subunit delta from Yersinia enterocolitica serotype O:8 / biotype 1B (strain NCTC 13174 / 8081).